Here is an 874-residue protein sequence, read N- to C-terminus: DNA mismatch repair protein MutS (874 aa).

Position 613–620 (613–620 (GPNMGGKS)) interacts with ATP. Residues 799-820 (EAGSTPSPAPVSVNEPKPAAPT) form a disordered region.

The protein belongs to the DNA mismatch repair MutS family.

Its function is as follows. This protein is involved in the repair of mismatches in DNA. It is possible that it carries out the mismatch recognition step. This protein has a weak ATPase activity. This is DNA mismatch repair protein MutS from Marinobacter nauticus (strain ATCC 700491 / DSM 11845 / VT8) (Marinobacter aquaeolei).